Here is a 439-residue protein sequence, read N- to C-terminus: sn-glycerol-3-phosphate-binding periplasmic protein UgpB (439 aa).

The first 25 residues, 1 to 25 (MFNNAIRKTSICVALTLAFSANAMA), serve as a signal peptide directing secretion. Positions 67, 91, 146, 272, 309, 348, and 399 each coordinate sn-glycerol 3-phosphate.

It belongs to the bacterial solute-binding protein 1 family. As to quaternary structure, the complex is composed of two ATP-binding proteins (UgpC), two transmembrane proteins (UgpA and UgpE) and a solute-binding protein (UgpB).

It localises to the periplasm. Functionally, part of the ABC transporter complex UgpBAEC involved in sn-glycerol-3-phosphate (G3P) import. Binds G3P. The polypeptide is sn-glycerol-3-phosphate-binding periplasmic protein UgpB (ugpB) (Yersinia enterocolitica serotype O:8 / biotype 1B (strain NCTC 13174 / 8081)).